The following is a 305-amino-acid chain: MQKYDIKTFQGMILALQDYWAQNGCTIVQPLDMEVGAGTSHPMTCLRALGPEPMSTAYVQPSRRPTDGRYGENPNRLQHYYQFQVALKPSPDNIQELYLGSLEVLGIDPLVHDIRFVEDNWENPTLGAWGLGWEVWLNGMEVTQFTYFQQVGGLECKPVTGEITYGIERLAMYIQEVDSVYDLTWNIAPDGSKVTYGDIFHQNEVEQSTYNFEHADVDFLFSFFEQCEKECQQLLELEKPLPLPAYERILKAAHAFNLLDARKAISVTERQRYILRIRNLTKSVAEAYYASREALGFPMCKKEQA.

The protein belongs to the class-II aminoacyl-tRNA synthetase family. Tetramer of two alpha and two beta subunits.

The protein resides in the cytoplasm. The catalysed reaction is tRNA(Gly) + glycine + ATP = glycyl-tRNA(Gly) + AMP + diphosphate. This Vibrio vulnificus (strain CMCP6) protein is Glycine--tRNA ligase alpha subunit.